The primary structure comprises 226 residues: Uridylate kinase (226 aa).

An ATP-binding site is contributed by K6–K10. Residue G43 participates in UMP binding. 2 residues coordinate ATP: G44 and R48. Residues D65 and F113–T119 each bind UMP. 4 residues coordinate ATP: T139, N140, Y145, and D148.

It belongs to the UMP kinase family. In terms of assembly, homohexamer.

It is found in the cytoplasm. It catalyses the reaction UMP + ATP = UDP + ADP. It functions in the pathway pyrimidine metabolism; CTP biosynthesis via de novo pathway; UDP from UMP (UMPK route): step 1/1. Inhibited by UTP. Its function is as follows. Catalyzes the reversible phosphorylation of UMP to UDP. The polypeptide is Uridylate kinase (Sulfurisphaera tokodaii (strain DSM 16993 / JCM 10545 / NBRC 100140 / 7) (Sulfolobus tokodaii)).